The following is a 603-amino-acid chain: MGDICETVEATFHGVAYLLTVSTIEGETLCVEVEQKSDCSRWRGDFTSRYIEDITAKTGNFKKFPVFVKMLLSALKQASDSVFVDLLTYQDLEVLKSRKAGGQAPPPRTQPPNNKRYLIMTYAAEFDRVHYPLPLLFEENPDPQHLKRIISQLRSEVEGLQVEAGNRRGGEVSAELRRLREENAALQRQLKQMERSGSGVGAGAESSEARELARELRTVRKERDLLQARVEAAEAELERERGLHRRELRRRAKEQQELVDELGRCKEQIRELKMRIRQLTEDLEARDRRMNSTDRIRSVYARGSNDGSTSGVAPRRPSSGGRGPSSNYMAPTRGADSRSNSRGRGTSSAERSRPNSAPIGGPRPRFDPTEYVRQRKERESAAVGGRRSNAPTPPRSAGTSRASSVVGSRPASAERLPPIRTASPTNSRPSSTERYRPGSGGPPGRTSAGGSRGAADRAGARGPDPYAPRSRGASPSGRATAWGEPGASGGGAGGWSKFPGGGGGGVGGSGQRISSNSPRSMSPARALAEVKQKLSTFVAGRGGSLQGDDASSAHGEHMSQSSKSQVFEDATAEIADIDSRLHALQNFLRMAKTSSTSTSTTQA.

The stretch at 169-289 (GGEVSAELRR…TEDLEARDRR (121 aa)) forms a coiled coil. The segment covering 288–297 (RRMNSTDRIR) has biased composition (basic and acidic residues). Disordered regions lie at residues 288-526 (RRMN…PARA) and 539-564 (AGRGGSLQGDDASSAHGEHMSQSSKS). Low complexity predominate over residues 337-348 (SRSNSRGRGTSS). Over residues 364 to 380 (PRFDPTEYVRQRKERES) the composition is skewed to basic and acidic residues. Polar residues predominate over residues 397–406 (AGTSRASSVV). The segment covering 486–510 (GASGGGAGGWSKFPGGGGGGVGGSG) has biased composition (gly residues). A compositionally biased stretch (polar residues) spans 511–520 (QRISSNSPRS).

It belongs to the CCDC61 family.

It localises to the cytoplasm. It is found in the cytoskeleton. Its subcellular location is the flagellum basal body. In terms of biological role, required for normal flagella and striated fiber formation. The sequence is that of Variable flagella 3 from Chlamydomonas reinhardtii (Chlamydomonas smithii).